Reading from the N-terminus, the 439-residue chain is Exodeoxyribonuclease 7 large subunit (439 aa).

It belongs to the XseA family. In terms of assembly, heterooligomer composed of large and small subunits.

Its subcellular location is the cytoplasm. The enzyme catalyses Exonucleolytic cleavage in either 5'- to 3'- or 3'- to 5'-direction to yield nucleoside 5'-phosphates.. Its function is as follows. Bidirectionally degrades single-stranded DNA into large acid-insoluble oligonucleotides, which are then degraded further into small acid-soluble oligonucleotides. The sequence is that of Exodeoxyribonuclease 7 large subunit from Haemophilus influenzae (strain ATCC 51907 / DSM 11121 / KW20 / Rd).